We begin with the raw amino-acid sequence, 502 residues long: ATP synthase subunit alpha (502 aa).

169 to 176 (GDRQTGKT) lines the ATP pocket.

Belongs to the ATPase alpha/beta chains family. F-type ATPases have 2 components, CF(1) - the catalytic core - and CF(0) - the membrane proton channel. CF(1) has five subunits: alpha(3), beta(3), gamma(1), delta(1), epsilon(1). CF(0) has three main subunits: a(1), b(2) and c(9-12). The alpha and beta chains form an alternating ring which encloses part of the gamma chain. CF(1) is attached to CF(0) by a central stalk formed by the gamma and epsilon chains, while a peripheral stalk is formed by the delta and b chains.

It is found in the cell membrane. It carries out the reaction ATP + H2O + 4 H(+)(in) = ADP + phosphate + 5 H(+)(out). Functionally, produces ATP from ADP in the presence of a proton gradient across the membrane. The alpha chain is a regulatory subunit. The sequence is that of ATP synthase subunit alpha from Exiguobacterium sp. (strain ATCC BAA-1283 / AT1b).